The following is a 167-amino-acid chain: Intermembrane phospholipid transport system binding protein MlaD (167 aa).

Residues 1–6 are Cytoplasmic-facing; it reads MRQTIK. A helical; Signal-anchor for type II membrane protein membrane pass occupies residues 7–27; that stretch reads YEFWVGLFLLLGIGALVFLGL. Residues 28–167 lie on the Periplasmic side of the membrane; it reads RVANVQGFAE…GNEKSESTEQ (140 aa). Residues 40-118 form an MCE/MlaD region; the sequence is SYTVTATFDN…GEQYIALTMG (79 aa).

Belongs to the MlaD family. The complex is composed of two ATP-binding proteins (MlaF), two transmembrane proteins (MlaE), two cytoplasmic solute-binding proteins (MlaB) and six periplasmic solute-binding proteins (MlaD).

It is found in the cell inner membrane. Its function is as follows. Part of the ABC transporter complex MlaFEDB, which is involved in a phospholipid transport pathway that maintains lipid asymmetry in the outer membrane by retrograde trafficking of phospholipids from the outer membrane to the inner membrane. MlaD functions in substrate binding with strong affinity for phospholipids and modulates ATP hydrolytic activity of the complex. The polypeptide is Intermembrane phospholipid transport system binding protein MlaD (Haemophilus influenzae (strain ATCC 51907 / DSM 11121 / KW20 / Rd)).